A 120-amino-acid chain; its full sequence is NAD(P)H-quinone oxidoreductase subunit 3, chloroplastic (120 aa).

A run of 3 helical transmembrane segments spans residues 7–27, 64–84, and 88–108; these read YETFWIFLLISSLMPILAFLI, MFALVFVVFDVETVFLYPWAM, and ILGISTFIEASIFVLILIVGS.

Belongs to the complex I subunit 3 family. In terms of assembly, NDH is composed of at least 16 different subunits, 5 of which are encoded in the nucleus.

The protein localises to the plastid. It localises to the chloroplast thylakoid membrane. The enzyme catalyses a plastoquinone + NADH + (n+1) H(+)(in) = a plastoquinol + NAD(+) + n H(+)(out). It catalyses the reaction a plastoquinone + NADPH + (n+1) H(+)(in) = a plastoquinol + NADP(+) + n H(+)(out). Functionally, NDH shuttles electrons from NAD(P)H:plastoquinone, via FMN and iron-sulfur (Fe-S) centers, to quinones in the photosynthetic chain and possibly in a chloroplast respiratory chain. The immediate electron acceptor for the enzyme in this species is believed to be plastoquinone. Couples the redox reaction to proton translocation, and thus conserves the redox energy in a proton gradient. This is NAD(P)H-quinone oxidoreductase subunit 3, chloroplastic from Cycas taitungensis (Prince sago).